A 243-amino-acid chain; its full sequence is Carboxy-S-adenosyl-L-methionine synthase (243 aa).

S-adenosyl-L-methionine-binding positions include Tyr-40, 65-67 (GCS), 90-91 (DN), 118-119 (DI), Asn-133, and Arg-200.

It belongs to the class I-like SAM-binding methyltransferase superfamily. Cx-SAM synthase family. As to quaternary structure, homodimer.

It carries out the reaction prephenate + S-adenosyl-L-methionine = carboxy-S-adenosyl-L-methionine + 3-phenylpyruvate + H2O. Its function is as follows. Catalyzes the conversion of S-adenosyl-L-methionine (SAM) to carboxy-S-adenosyl-L-methionine (Cx-SAM). This chain is Carboxy-S-adenosyl-L-methionine synthase, found in Shewanella pealeana (strain ATCC 700345 / ANG-SQ1).